The sequence spans 812 residues: INO80 complex subunit D (812 aa).

Disordered stretches follow at residues 521 to 573 (NSRK…LCMP) and 581 to 600 (EVSS…ELPD). Basic residues predominate over residues 524 to 558 (KVQHHQQRKPRKKTKPPALTKKTKKKRRRGPRRPQ). Polar residues predominate over residues 585–595 (IRSPSTPNLST).

Belongs to the INO80D family. As to quaternary structure, component of the chromatin-remodeling INO80 complex.

It is found in the nucleus. Putative regulatory component of the chromatin remodeling INO80 complex which is involved in transcriptional regulation, DNA replication and probably DNA repair. In Xenopus laevis (African clawed frog), this protein is INO80 complex subunit D.